Consider the following 209-residue polypeptide: Ribosomal RNA small subunit methyltransferase G (209 aa).

Residues G75, L80, 126–127 (VE), and R141 each bind S-adenosyl-L-methionine.

It belongs to the methyltransferase superfamily. RNA methyltransferase RsmG family.

Its subcellular location is the cytoplasm. It catalyses the reaction guanosine(527) in 16S rRNA + S-adenosyl-L-methionine = N(7)-methylguanosine(527) in 16S rRNA + S-adenosyl-L-homocysteine. Functionally, specifically methylates the N7 position of guanine in position 527 of 16S rRNA. The polypeptide is Ribosomal RNA small subunit methyltransferase G (Colwellia psychrerythraea (strain 34H / ATCC BAA-681) (Vibrio psychroerythus)).